The following is a 288-amino-acid chain: RELT-like protein 1 (288 aa).

The N-terminal stretch at 1–23 is a signal peptide; it reads MAPPAASGIPSIAPSLGPTAVWL. The Extracellular segment spans residues 24–57; that stretch reads GNRSDLGDVQALASRDLPTTTVTAGNNNKPEHLE. Asn-25 carries N-linked (GlcNAc...) asparagine glycosylation. The helical transmembrane segment at 58-78 threads the bilayer; sequence YVAFVLVPVFFIMGLLGILIC. The Cytoplasmic segment spans residues 79–288; the sequence is HVLKKKGYRC…EGTQERRSSE (210 aa). Disordered stretches follow at residues 145–172 and 237–288; these read FEPESPMSPNAPGSPTSPGSPLSPGAAS and HKSN…RSSE. Positions 152-172 are enriched in low complexity; the sequence is SPNAPGSPTSPGSPLSPGAAS. Basic and acidic residues predominate over residues 237–246; sequence HKSNSKERKS.

This sequence belongs to the RELT family.

Its subcellular location is the cell membrane. The sequence is that of RELT-like protein 1 (RELL1) from Gallus gallus (Chicken).